We begin with the raw amino-acid sequence, 615 residues long: Angiotensin-converting enzyme (615 aa).

The N-terminal stretch at 1–17 is a signal peptide; it reads MRLFLLALLATLAVTQA. The Peptidase M2 domain occupies 19 to 607; it reads VKEEIQAKEY…IKNNVHIGWT (589 aa). The N-linked (GlcNAc...) asparagine glycan is linked to N53. A disulfide bond links C133 and C141. N-linked (GlcNAc...) asparagine glycosylation is found at N196 and N311. C336 and C354 are oxidised to a cystine. H367 is a binding site for Zn(2+). E368 (proton acceptor) is an active-site residue. 2 residues coordinate Zn(2+): H371 and E395. Catalysis depends on H497, which acts as the Proton donor. The cysteines at positions 522 and 540 are disulfide-linked.

The protein belongs to the peptidase M2 family. Zn(2+) serves as cofactor. In terms of processing, glycosylated. In terms of tissue distribution, expressed in vesicular structures in spermatocytes and early spermatids (at protein level).

It is found in the secreted. The protein localises to the extracellular space. It carries out the reaction Release of a C-terminal dipeptide, oligopeptide-|-Xaa-Yaa, when Xaa is not Pro, and Yaa is neither Asp nor Glu. Thus, conversion of angiotensin I to angiotensin II, with increase in vasoconstrictor activity, but no action on angiotensin II.. Inhibited by captopril and, to a lesser extent, by lisinopril, trandolaprilat, fosinoprilat and enalaprilat. In terms of biological role, may be involved in the specific maturation or degradation of a number of bioactive peptides. May play a role in the contractions of the heart, gut and testes, and in spermatid differentiation. The chain is Angiotensin-converting enzyme (Ance) from Drosophila melanogaster (Fruit fly).